Reading from the N-terminus, the 129-residue chain is Cytochrome c oxidase subunit 5B, mitochondrial (129 aa).

The transit peptide at 1-31 (MASRLLRGVGALAAQALRAHGPRGVAATRSM) directs the protein to the mitochondrion. N6-acetyllysine occurs at positions 68 and 86. The Zn(2+) site is built by Cys91, Cys93, Cys113, and Cys116. N6-acetyllysine is present on Lys121.

The protein belongs to the cytochrome c oxidase subunit 5B family. Component of the cytochrome c oxidase (complex IV, CIV), a multisubunit enzyme composed of 14 subunits. The complex is composed of a catalytic core of 3 subunits MT-CO1, MT-CO2 and MT-CO3, encoded in the mitochondrial DNA, and 11 supernumerary subunits COX4I, COX5A, COX5B, COX6A, COX6B, COX6C, COX7A, COX7B, COX7C, COX8 and NDUFA4, which are encoded in the nuclear genome. The complex exists as a monomer or a dimer and forms supercomplexes (SCs) in the inner mitochondrial membrane with NADH-ubiquinone oxidoreductase (complex I, CI) and ubiquinol-cytochrome c oxidoreductase (cytochrome b-c1 complex, complex III, CIII), resulting in different assemblies (supercomplex SCI(1)III(2)IV(1) and megacomplex MCI(2)III(2)IV(2)).

The protein localises to the mitochondrion inner membrane. The protein operates within energy metabolism; oxidative phosphorylation. In terms of biological role, component of the cytochrome c oxidase, the last enzyme in the mitochondrial electron transport chain which drives oxidative phosphorylation. The respiratory chain contains 3 multisubunit complexes succinate dehydrogenase (complex II, CII), ubiquinol-cytochrome c oxidoreductase (cytochrome b-c1 complex, complex III, CIII) and cytochrome c oxidase (complex IV, CIV), that cooperate to transfer electrons derived from NADH and succinate to molecular oxygen, creating an electrochemical gradient over the inner membrane that drives transmembrane transport and the ATP synthase. Cytochrome c oxidase is the component of the respiratory chain that catalyzes the reduction of oxygen to water. Electrons originating from reduced cytochrome c in the intermembrane space (IMS) are transferred via the dinuclear copper A center (CU(A)) of subunit 2 and heme A of subunit 1 to the active site in subunit 1, a binuclear center (BNC) formed by heme A3 and copper B (CU(B)). The BNC reduces molecular oxygen to 2 water molecules using 4 electrons from cytochrome c in the IMS and 4 protons from the mitochondrial matrix. This chain is Cytochrome c oxidase subunit 5B, mitochondrial (Cox5b), found in Rattus norvegicus (Rat).